The following is a 362-amino-acid chain: Phosphoserine aminotransferase (362 aa).

L-glutamate contacts are provided by S9 and R42. Residues 76-77 (GR), W102, T153, D174, and Q197 each bind pyridoxal 5'-phosphate. Residue K198 is modified to N6-(pyridoxal phosphate)lysine. 239–240 (NT) serves as a coordination point for pyridoxal 5'-phosphate.

Belongs to the class-V pyridoxal-phosphate-dependent aminotransferase family. SerC subfamily. As to quaternary structure, homodimer. The cofactor is pyridoxal 5'-phosphate.

The protein localises to the cytoplasm. It catalyses the reaction O-phospho-L-serine + 2-oxoglutarate = 3-phosphooxypyruvate + L-glutamate. It carries out the reaction 4-(phosphooxy)-L-threonine + 2-oxoglutarate = (R)-3-hydroxy-2-oxo-4-phosphooxybutanoate + L-glutamate. It functions in the pathway amino-acid biosynthesis; L-serine biosynthesis; L-serine from 3-phospho-D-glycerate: step 2/3. It participates in cofactor biosynthesis; pyridoxine 5'-phosphate biosynthesis; pyridoxine 5'-phosphate from D-erythrose 4-phosphate: step 3/5. Functionally, catalyzes the reversible conversion of 3-phosphohydroxypyruvate to phosphoserine and of 3-hydroxy-2-oxo-4-phosphonooxybutanoate to phosphohydroxythreonine. This Escherichia coli O7:K1 (strain IAI39 / ExPEC) protein is Phosphoserine aminotransferase.